A 173-amino-acid chain; its full sequence is Crossover junction endodeoxyribonuclease RuvC (173 aa).

Residues D8, E67, and D139 contribute to the active site. Residues D8, E67, and D139 each coordinate Mg(2+).

Belongs to the RuvC family. In terms of assembly, homodimer which binds Holliday junction (HJ) DNA. The HJ becomes 2-fold symmetrical on binding to RuvC with unstacked arms; it has a different conformation from HJ DNA in complex with RuvA. In the full resolvosome a probable DNA-RuvA(4)-RuvB(12)-RuvC(2) complex forms which resolves the HJ. Mg(2+) is required as a cofactor.

The protein localises to the cytoplasm. It catalyses the reaction Endonucleolytic cleavage at a junction such as a reciprocal single-stranded crossover between two homologous DNA duplexes (Holliday junction).. Functionally, the RuvA-RuvB-RuvC complex processes Holliday junction (HJ) DNA during genetic recombination and DNA repair. Endonuclease that resolves HJ intermediates. Cleaves cruciform DNA by making single-stranded nicks across the HJ at symmetrical positions within the homologous arms, yielding a 5'-phosphate and a 3'-hydroxyl group; requires a central core of homology in the junction. The consensus cleavage sequence is 5'-(A/T)TT(C/G)-3'. Cleavage occurs on the 3'-side of the TT dinucleotide at the point of strand exchange. HJ branch migration catalyzed by RuvA-RuvB allows RuvC to scan DNA until it finds its consensus sequence, where it cleaves and resolves the cruciform DNA. The protein is Crossover junction endodeoxyribonuclease RuvC of Psychromonas ingrahamii (strain DSM 17664 / CCUG 51855 / 37).